Here is a 170-residue protein sequence, read N- to C-terminus: MDLKRFIRDIPDFPQKGIVFRDITPLLRNQEAFKEAIDRMCELVFDKEFDLVVAPEARGFILGAAMAYKLGKGFVPVRKPGKLPYKTVYEEYQLEYGTEQLHIHEDAIEKGQKVLIVDDVLATGGTAEALIRLVKKLGGEVVSLAFLVELSYLEPRKRLEGYDVKTLIVY.

The protein belongs to the purine/pyrimidine phosphoribosyltransferase family. Homodimer.

The protein localises to the cytoplasm. The enzyme catalyses AMP + diphosphate = 5-phospho-alpha-D-ribose 1-diphosphate + adenine. Its pathway is purine metabolism; AMP biosynthesis via salvage pathway; AMP from adenine: step 1/1. In terms of biological role, catalyzes a salvage reaction resulting in the formation of AMP, that is energically less costly than de novo synthesis. The chain is Adenine phosphoribosyltransferase from Thermotoga sp. (strain RQ2).